The following is a 1226-amino-acid chain: MKGNSRHPSVPPPPLAPQSPTSKATAKYTNKDGSKFITVPKGSTPADSAQPSPTITTAANAAPGPQSASTSHTQGHGLGQAEGQVQPVNKKKAKRRQKAAAKAAATQGIANPAPSNGFPSPSPSHAQQSTEADHDDSHDEHLEEFNNRRDSRASNIHENGFAQGATTSSKKSKKKKKKSHAGQNAAELPNSPQHDTYVPAPQLSQHPRPGISKEKIWNTSSQEERERIKEFWLGLSETERKELVRVEKDAVLKKMKEQQKHTCSCTVCGRKRTAIEEELEGLYDAYYEELEQYANHPNQGEAPPMLGRRPSFGSMTGMRPRGLPTSYPSHHQPSHAQIVDHGAEEDDEEEEVEEEYSEDEQDEDDYSDDEPSEELHRSDYPADFFNFGNSLTVQGGILTVADDLLKNDGKKFIEMMEQLAERRMAREEDARDQFGSPFSHSAGDRNAHYHPPADDEVDDEEYDEDYDDDEEEEYDSQDEEETMTEEQRMEEGRRMFQIFAARMFEQRVLTAYREKVARERQNMLLEELADEKRRSEERLVKKQKEAQKKKERQARKKELQAEEKARREEEKMAEEKAKKAEEDRQKEQRRQKEEEKRKQKEAQKKAEEEERRRKEAERQRRNHEREENERKARELKEREKKAREEARLKEKEAREQKEREAKEQKERQERQERQEREKREREAKAKAEMEAAKAAKDKSKQEDRAAQKAAALATTAPVPITLPKRPAQPIQTSVPAAVPALPQQPAAYASPVIPVATPAFPKVPAPAQSRQIHQQESVTTSSGPTSQPGSAVSQNPSPHTLTPILTSPGPVKPPSKSGVAVSGTQNSGVQLPSPAPSTTVNAGSKPLQSQANPFGGPSMNMPFQPTPQPPPGFSNHMQPQYPPFYNPANSYNRVAPGMMAAPPGFSAPLGGRAMSMHSPGFPGPLDSPVSSFAGLPAGLSSLLGKDNVPSHTRQGSGSFEIGPVSSSSQPISRPTPIGRPASVVHGQRRSPEFSTNGTDQAEQEVHLGSSALLEPDDTQQDFPARSHFGLLGTSAPGVRSAPGFGGGPFGMETGFSLPHQNSPWNPVPPLQHNPFVPPPPGFPSSSHHGPWSQAAPPGIMGRNPSIVERSAPWSVTLRKSLCAVCEDLGAGGSSSYDGFIPLGEIMAHMKQFTVNEKEVLDICDTEGNPSNGGGSFIVRDPLSPSGSPLIRYVPDDDASRAPYGPIKHPGDIGSPIVGSGSFHVGS.

6 disordered regions span residues 1-225, 294-388, 423-491, 526-727, 757-876, and 944-1001; these read MKGN…QEER, ANHP…FNFG, RMAR…RMEE, EELA…KRPA, TPAF…FSNH, and GKDN…TDQA. Over residues 45–59 the composition is skewed to polar residues; sequence PADSAQPSPTITTAA. Basic residues predominate over residues 89-99; the sequence is NKKKAKRRQKA. A compositionally biased stretch (polar residues) spans 113–130; it reads APSNGFPSPSPSHAQQST. Residues 131–152 are compositionally biased toward basic and acidic residues; the sequence is EADHDDSHDEHLEEFNNRRDSR. The segment covering 170–180 has biased composition (basic residues); the sequence is KKSKKKKKKSH. A compositionally biased stretch (basic and acidic residues) spans 211 to 225; it reads ISKEKIWNTSSQEER. The segment covering 326-335 has biased composition (polar residues); it reads SYPSHHQPSH. The span at 343-372 shows a compositional bias: acidic residues; that stretch reads AEEDDEEEEVEEEYSEDEQDEDDYSDDEPS. Composition is skewed to basic and acidic residues over residues 423-432 and 442-453; these read RMAREEDARD and AGDRNAHYHPPA. Over residues 454-484 the composition is skewed to acidic residues; it reads DDEVDDEEYDEDYDDDEEEEYDSQDEEETMT. Residues 517–708 are a coiled coil; it reads ARERQNMLLE…SKQEDRAAQK (192 aa). Composition is skewed to basic and acidic residues over residues 530 to 548 and 556 to 706; these read DEKR…EAQK and KKEL…DRAA. 2 stretches are compositionally biased toward low complexity: residues 707-716 and 777-790; these read QKAAALATTA and SVTT…QPGS. Polar residues-rich tracts occupy residues 791–805 and 822–852; these read AVSQ…TPIL and SGTQ…SQAN.

It belongs to the NST1 family.

It is found in the cytoplasm. May act as a negative regulator of salt tolerance. In Neurospora crassa (strain ATCC 24698 / 74-OR23-1A / CBS 708.71 / DSM 1257 / FGSC 987), this protein is Stress response protein nst1 (nst1).